The following is a 232-amino-acid chain: Ribonuclease 3 (232 aa).

The 126-residue stretch at 10–135 (ALKIYEATGY…LIGAMYMDGG (126 aa)) folds into the RNase III domain. Glu-48 serves as a coordination point for Mg(2+). Asp-52 is a catalytic residue. Residues Asn-121 and Glu-124 each contribute to the Mg(2+) site. Residue Glu-124 is part of the active site. The DRBM domain maps to 161 to 230 (DPKTALQEWV…AKLMLKKITE (70 aa)).

The protein belongs to the ribonuclease III family. Homodimer. Mg(2+) serves as cofactor.

The protein resides in the cytoplasm. It carries out the reaction Endonucleolytic cleavage to 5'-phosphomonoester.. Digests double-stranded RNA. Involved in the processing of primary rRNA transcript to yield the immediate precursors to the large and small rRNAs (23S and 16S). Processes some mRNAs, and tRNAs when they are encoded in the rRNA operon. Processes pre-crRNA and tracrRNA of type II CRISPR loci if present in the organism. The protein is Ribonuclease 3 of Anaplasma marginale (strain Florida).